The following is a 578-amino-acid chain: Leucine-rich repeat-containing protein 15 (578 aa).

The first 21 residues, 1 to 21, serve as a signal peptide directing secretion; it reads MPLKHYLLLLVGCQAWALGLA. One can recognise an LRRNT domain in the interval 22–53; that stretch reads YYGCPSECTCSRASQVECTGARIVAMPTPLPW. At 22 to 535 the chain is on the extracellular side; that stretch reads YYGCPSECTC…TWGMTEAQSG (514 aa). LRR repeat units follow at residues 54–75, 78–99, 102–123, 126–147, 150–171, 174–195, 198–219, 222–243, 246–267, 270–291, 294–315, 318–339, 342–363, 366–387, and 390–411; these read NAMS…LFLN, ALIA…AFRN, SLRY…VFQD, NLES…QFSQ, NLRE…AFDH, GLTK…LFQH, NLQV…TFDA, NLQE…LFHN, NLQR…IFMQ, QLNK…VFGP, NLRE…TFSH, QLQV…AFNG, NLRE…VFRS, NLQN…IFAN, and GLTT…IFDH. The N-linked (GlcNAc...) asparagine glycan is linked to N75. N369 carries N-linked (GlcNAc...) asparagine glycosylation. An LRRCT domain is found at 423–473; that stretch reads NPWRCDSDILPLHNWLLLNRARLGTDTLPVCSSPANVRGQSLVIININFPG. Residues 476-500 are disordered; the sequence is VQGPETPEVPSYPDTPSYPDTTSVS. A helical transmembrane segment spans residues 536-556; sequence LAIAAIVIGIIALACSLAACI. Over 557 to 578 the chain is Cytoplasmic; sequence CCCCCKKRSQAVLMQMKAPNEC.

The protein resides in the cell membrane. This is Leucine-rich repeat-containing protein 15 (Lrrc15) from Rattus norvegicus (Rat).